Consider the following 97-residue polypeptide: Large ribosomal subunit protein bL28 (97 aa).

It belongs to the bacterial ribosomal protein bL28 family.

The polypeptide is Large ribosomal subunit protein bL28 (Rhizorhabdus wittichii (strain DSM 6014 / CCUG 31198 / JCM 15750 / NBRC 105917 / EY 4224 / RW1) (Sphingomonas wittichii)).